The sequence spans 350 residues: Arabinogalactan endo-beta-1,4-galactanase (350 aa).

An N-terminal signal peptide occupies residues 1–16; that stretch reads MFASLLLAALPLLTHA. The N-linked (GlcNAc...) asparagine glycan is linked to N128. E152 serves as the catalytic Proton donor. Residue E262 is the Nucleophile of the active site.

The protein belongs to the glycosyl hydrolase 53 family. In terms of processing, glycosylated.

It catalyses the reaction The enzyme specifically hydrolyzes (1-&gt;4)-beta-D-galactosidic linkages in type I arabinogalactans.. In Aspergillus aculeatus, this protein is Arabinogalactan endo-beta-1,4-galactanase (gal1).